The following is a 376-amino-acid chain: Carbamoyl phosphate synthase small chain (376 aa).

The interval 1 to 187 (MRAFLALEDG…AADGAYAWPG (187 aa)) is CPSase. L-glutamine contacts are provided by Ser45, Gly239, and Gly241. In terms of domain architecture, Glutamine amidotransferase type-1 spans 191-376 (RLVVYDYGIK…RGMVREAVGR (186 aa)). The Nucleophile role is filled by Cys266. L-glutamine-binding residues include Leu267, Gln270, Asn308, Gly310, and Phe311. Residues His349 and Glu351 contribute to the active site.

This sequence belongs to the CarA family. In terms of assembly, composed of two chains; the small (or glutamine) chain promotes the hydrolysis of glutamine to ammonia, which is used by the large (or ammonia) chain to synthesize carbamoyl phosphate. Tetramer of heterodimers (alpha,beta)4.

The enzyme catalyses hydrogencarbonate + L-glutamine + 2 ATP + H2O = carbamoyl phosphate + L-glutamate + 2 ADP + phosphate + 2 H(+). The catalysed reaction is L-glutamine + H2O = L-glutamate + NH4(+). It participates in amino-acid biosynthesis; L-arginine biosynthesis; carbamoyl phosphate from bicarbonate: step 1/1. Its pathway is pyrimidine metabolism; UMP biosynthesis via de novo pathway; (S)-dihydroorotate from bicarbonate: step 1/3. Functionally, small subunit of the glutamine-dependent carbamoyl phosphate synthetase (CPSase). CPSase catalyzes the formation of carbamoyl phosphate from the ammonia moiety of glutamine, carbonate, and phosphate donated by ATP, constituting the first step of 2 biosynthetic pathways, one leading to arginine and/or urea and the other to pyrimidine nucleotides. The small subunit (glutamine amidotransferase) binds and cleaves glutamine to supply the large subunit with the substrate ammonia. The polypeptide is Carbamoyl phosphate synthase small chain (Nitratidesulfovibrio vulgaris (strain DSM 19637 / Miyazaki F) (Desulfovibrio vulgaris)).